The following is a 496-amino-acid chain: Aspartyl/glutamyl-tRNA(Asn/Gln) amidotransferase subunit B (496 aa).

A disordered region spans residues 475–496 (TGGSADPSKVNTLLREQLEDKK).

The protein belongs to the GatB/GatE family. GatB subfamily. Heterotrimer of A, B and C subunits.

It catalyses the reaction L-glutamyl-tRNA(Gln) + L-glutamine + ATP + H2O = L-glutaminyl-tRNA(Gln) + L-glutamate + ADP + phosphate + H(+). The catalysed reaction is L-aspartyl-tRNA(Asn) + L-glutamine + ATP + H2O = L-asparaginyl-tRNA(Asn) + L-glutamate + ADP + phosphate + 2 H(+). Functionally, allows the formation of correctly charged Asn-tRNA(Asn) or Gln-tRNA(Gln) through the transamidation of misacylated Asp-tRNA(Asn) or Glu-tRNA(Gln) in organisms which lack either or both of asparaginyl-tRNA or glutaminyl-tRNA synthetases. The reaction takes place in the presence of glutamine and ATP through an activated phospho-Asp-tRNA(Asn) or phospho-Glu-tRNA(Gln). The sequence is that of Aspartyl/glutamyl-tRNA(Asn/Gln) amidotransferase subunit B from Haloquadratum walsbyi (strain DSM 16790 / HBSQ001).